Consider the following 324-residue polypeptide: MGAMIVREVFEIAEKIKNMEIRGAGEIARAVAEALKIQAEKSKAKTSHELWKELKEASKILYNTRPTAVSLPNALRYVMYRGKIAYTSNADLESLRYTIINAAKEFIYNSEKAIERIGEIGAKRIEDGDVIMTHCHSKAAISVMKTAFDQGKDIKVIVTETRPRWQGKITAKELASYGIPVIYIVDGAARHYMKMTDKVVMGADSITANGAVINQIGTALIALTAKEHRVWVMIAAETYKFHPETMLGQLVEIEMRDPTEVVPKEELETWPKNIEVLNPAFDVTPPEYIDVIITEKGVIPPYAAIDILKEEFGWAFKYREPWED.

Substrate is bound by residues 22–25 (RGAG) and Arg65. Cys135 functions as the Proton acceptor in the catalytic mechanism. 137–139 (SKA) serves as a coordination point for substrate. The active-site Proton donor is the Asp204. A substrate-binding site is contributed by Lys240.

It belongs to the eIF-2B alpha/beta/delta subunits family. R15P isomerase subfamily.

The catalysed reaction is alpha-D-ribose 1,5-bisphosphate = D-ribulose 1,5-bisphosphate. Its function is as follows. Catalyzes the isomerization of ribose 1,5-bisphosphate (R15P) to ribulose 1,5-bisphosphate (RuBP), the CO(2) acceptor and substrate for RubisCO. Functions in an archaeal AMP degradation pathway, together with AMP phosphorylase and RubisCO. The chain is Ribose 1,5-bisphosphate isomerase from Pyrococcus furiosus (strain ATCC 43587 / DSM 3638 / JCM 8422 / Vc1).